The sequence spans 392 residues: Alanine--glyoxylate aminotransferase (392 aa).

Lys209 bears the N6-(pyridoxal phosphate)lysine mark. Lys225 is modified (N6-acetyllysine; alternate). The residue at position 225 (Lys225) is an N6-succinyllysine; alternate. An N6-acetyllysine mark is found at Lys234 and Lys312. Arg360 contributes to the substrate binding site. The Microbody targeting signal signature appears at 390–392 (KKL).

It belongs to the class-V pyridoxal-phosphate-dependent aminotransferase family. In terms of assembly, homodimer. The cofactor is pyridoxal 5'-phosphate.

The protein localises to the peroxisome. It catalyses the reaction L-serine + pyruvate = 3-hydroxypyruvate + L-alanine. It carries out the reaction glyoxylate + L-alanine = glycine + pyruvate. Its function is as follows. Peroxisomal aminotransferase that catalyzes the transamination of glyoxylate to glycine and contributes to the glyoxylate detoxification. Also catalyzes the transamination between L-serine and pyruvate and contributes to gluconeogenesis from the L-serine metabolism. The polypeptide is Alanine--glyoxylate aminotransferase (Pongo abelii (Sumatran orangutan)).